The following is a 159-amino-acid chain: Crossover junction endodeoxyribonuclease RuvC (159 aa).

Catalysis depends on residues aspartate 7, glutamate 67, and aspartate 139. Residues aspartate 7, glutamate 67, and aspartate 139 each coordinate Mg(2+).

Belongs to the RuvC family. In terms of assembly, homodimer which binds Holliday junction (HJ) DNA. The HJ becomes 2-fold symmetrical on binding to RuvC with unstacked arms; it has a different conformation from HJ DNA in complex with RuvA. In the full resolvosome a probable DNA-RuvA(4)-RuvB(12)-RuvC(2) complex forms which resolves the HJ. It depends on Mg(2+) as a cofactor.

It localises to the cytoplasm. It catalyses the reaction Endonucleolytic cleavage at a junction such as a reciprocal single-stranded crossover between two homologous DNA duplexes (Holliday junction).. The RuvA-RuvB-RuvC complex processes Holliday junction (HJ) DNA during genetic recombination and DNA repair. Endonuclease that resolves HJ intermediates. Cleaves cruciform DNA by making single-stranded nicks across the HJ at symmetrical positions within the homologous arms, yielding a 5'-phosphate and a 3'-hydroxyl group; requires a central core of homology in the junction. The consensus cleavage sequence is 5'-(A/T)TT(C/G)-3'. Cleavage occurs on the 3'-side of the TT dinucleotide at the point of strand exchange. HJ branch migration catalyzed by RuvA-RuvB allows RuvC to scan DNA until it finds its consensus sequence, where it cleaves and resolves the cruciform DNA. This Orientia tsutsugamushi (strain Ikeda) (Rickettsia tsutsugamushi) protein is Crossover junction endodeoxyribonuclease RuvC.